Consider the following 174-residue polypeptide: Ferredoxin-2, mitochondrial (174 aa).

The transit peptide at 1 to 43 (MAASMARGVSARVLLRAAGGSWGPRAGHAAVTSRTFGTTGERR) directs the protein to the mitochondrion. The tract at residues 26 to 52 (AGHAAVTSRTFGTTGERRAGEEAADSP) is disordered. The 2Fe-2S ferredoxin-type domain occupies 59 to 161 (VNVVFVDRSG…GVEFALPKIT (103 aa)). Residues C96, C102, C105, and C142 each contribute to the [2Fe-2S] cluster site.

It belongs to the adrenodoxin/putidaredoxin family. As to quaternary structure, component of the mitochondrial core iron-sulfur cluster (ISC) complex composed of NFS1, LYRM4, NDUFAB1, ISCU, FXN, and FDX2; this complex is a heterohexamer containing two copies of each monomer. Form a heterodimer complex with NFS1. Interacts (in both their reduced and oxidized states) with the cysteine desulfurase (NFS1:LYRM4) complex; this interaction stimulates cysteine desulfurase activity, and serves as a reductant for Fe-S cluster assembly. [2Fe-2S] cluster is required as a cofactor.

The protein resides in the mitochondrion. It is found in the mitochondrion matrix. In terms of biological role, electron donor, of the core iron-sulfur cluster (ISC) assembly complex, that acts to reduce the persulfide into sulfide during [2Fe-2S] clusters assembly on the scaffolding protein ISCU. The core iron-sulfur cluster (ISC) assembly complex is involved in the de novo synthesis of a [2Fe-2S] cluster, the first step of the mitochondrial iron-sulfur protein biogenesis. This process is initiated by the cysteine desulfurase complex (NFS1:LYRM4:NDUFAB1) that produces persulfide which is delivered on the scaffold protein ISCU in a FXN-dependent manner. Then this complex is stabilized by FDX2 which provides reducing equivalents to accomplish the [2Fe-2S] cluster assembly. Finally, the [2Fe-2S] cluster is transferred from ISCU to chaperone proteins, including HSCB, HSPA9 and GLRX5. Essential for coenzyme Q biosynthesis: together with FDXR, transfers the electrons required for the hydroxylation reaction performed by COQ6. This chain is Ferredoxin-2, mitochondrial, found in Mus musculus (Mouse).